Here is a 315-residue protein sequence, read N- to C-terminus: Nucleotide-binding protein PsycPRwf_2129 (315 aa).

29-36 contacts ATP; it reads GRSGSGKT. GTP is bound at residue 79 to 82; it reads DIRT.

This sequence belongs to the RapZ-like family.

Displays ATPase and GTPase activities. This chain is Nucleotide-binding protein PsycPRwf_2129, found in Psychrobacter sp. (strain PRwf-1).